The chain runs to 471 residues: Siroheme synthase 1 (471 aa).

A precorrin-2 dehydrogenase /sirohydrochlorin ferrochelatase region spans residues 1–203; it reads MEYLPLFAQL…GDTRAAEAVL (203 aa). NAD(+) is bound by residues 22 to 23 and 43 to 44; these read EV and KK. Serine 128 is subject to Phosphoserine. Residues 215–471 form a uroporphyrinogen-III C-methyltransferase region; the sequence is GEIILVGAGP…NLRSSVVNLA (257 aa). Proline 224 contributes to the S-adenosyl-L-methionine binding site. Aspartate 247 serves as the catalytic Proton acceptor. The active-site Proton donor is lysine 269. S-adenosyl-L-methionine-binding positions include 300-302, isoleucine 305, 330-331, methionine 382, and glycine 411; these read GGD and TA.

In the N-terminal section; belongs to the precorrin-2 dehydrogenase / sirohydrochlorin ferrochelatase family. This sequence in the C-terminal section; belongs to the precorrin methyltransferase family.

It carries out the reaction uroporphyrinogen III + 2 S-adenosyl-L-methionine = precorrin-2 + 2 S-adenosyl-L-homocysteine + H(+). The enzyme catalyses precorrin-2 + NAD(+) = sirohydrochlorin + NADH + 2 H(+). The catalysed reaction is siroheme + 2 H(+) = sirohydrochlorin + Fe(2+). The protein operates within cofactor biosynthesis; adenosylcobalamin biosynthesis; precorrin-2 from uroporphyrinogen III: step 1/1. It functions in the pathway cofactor biosynthesis; adenosylcobalamin biosynthesis; sirohydrochlorin from precorrin-2: step 1/1. It participates in porphyrin-containing compound metabolism; siroheme biosynthesis; precorrin-2 from uroporphyrinogen III: step 1/1. Its pathway is porphyrin-containing compound metabolism; siroheme biosynthesis; siroheme from sirohydrochlorin: step 1/1. The protein operates within porphyrin-containing compound metabolism; siroheme biosynthesis; sirohydrochlorin from precorrin-2: step 1/1. Its function is as follows. Multifunctional enzyme that catalyzes the SAM-dependent methylations of uroporphyrinogen III at position C-2 and C-7 to form precorrin-2 via precorrin-1. Then it catalyzes the NAD-dependent ring dehydrogenation of precorrin-2 to yield sirohydrochlorin. Finally, it catalyzes the ferrochelation of sirohydrochlorin to yield siroheme. This Cronobacter sakazakii (strain ATCC BAA-894) (Enterobacter sakazakii) protein is Siroheme synthase 1.